A 730-amino-acid polypeptide reads, in one-letter code: MQEKGKCPVTGMTKHKTSGGTTNQDWWPNQLNLKMLHQNPTMRNPMGERFNYAEEFKKLDFEALKNDLYALMTDSQEWWPADYGHYGPLFIRMAWHSAGTYRMGDGRGGAGTGNQRFAPLNSWPDNVNLDKARRLLWPIKQKYGKKISWADLMILAGNCALESMGFKTFGFAGGREDIWEPEEDIYWGQENEWLGDKRYSGDRELENPLAAVQMGLIYVNPEGPNGQPSALASGKDIRDTFARMAMNDEETVALVAGGHTFGKCHGAGSATHVGPEPEAANIEEQGLGWKNSMGSGKGIHTISSGIEGAWTPTPIKWDNSYLDTLFNYDWDLVKSPAGAWQWVPTDPTAADSVPDAHDPSKRHAPMMTTADLALRMDPIYGPIAKGFRENPEAFADAFGRAWFKLTHRDMGPRTRFLGPEVPTEELIWQDPVPAVDFELIDEDDITGLKGKIIDSGLSLSELVSTAWASASSFRGSDKRGGANGARIRLAPQKDWEVNQPEQLQTVLQALEKIQDTFNSAQSGKKRISLADLIVLAGCAGVEQAAKNAGFDVCVPFTPGRTDASQEQTEVESFSVLEPMADGFRNYSKGKYTISAEKLLVDRTQLLGLTAPEMTVLVGGMRVLNANYNKSQQGVLTKRPENLTNDFFVNLLDMDTAWKVTAEGGDMFEGIDRKTGELKWTGTGVDLVFGSNSELRAIAEVYASDDAKQKFVEDFVTAWNKVMNADRFDLA.

Residues 1-24 (MQEKGKCPVTGMTKHKTSGGTTNQ) are disordered. The tryptophyl-tyrosyl-methioninium (Trp-Tyr) (with M-244) cross-link spans 95–218 (WHSAGTYRMG…LAAVQMGLIY (124 aa)). Catalysis depends on histidine 96, which acts as the Proton acceptor. A cross-link (tryptophyl-tyrosyl-methioninium (Tyr-Met) (with W-95)) is located at residues 218 to 244 (YVNPEGPNGQPSALASGKDIRDTFARM). Histidine 259 serves as a coordination point for heme b.

Belongs to the peroxidase family. Peroxidase/catalase subfamily. In terms of assembly, homodimer or homotetramer. The cofactor is heme b. Post-translationally, formation of the three residue Trp-Tyr-Met cross-link is important for the catalase, but not the peroxidase activity of the enzyme.

It carries out the reaction H2O2 + AH2 = A + 2 H2O. It catalyses the reaction 2 H2O2 = O2 + 2 H2O. Functionally, bifunctional enzyme with both catalase and broad-spectrum peroxidase activity. This Alkaliphilus metalliredigens (strain QYMF) protein is Catalase-peroxidase 1.